Consider the following 640-residue polypeptide: Isoniazid-induced protein IniA (640 aa).

The chain crosses the membrane as a helical span at residues 497 to 519 (IGMLSSVVGLGLFNPLSVGAGLI). Residues 560–628 (RDRLKMIQRL…QVNDNLAGLE (69 aa)) adopt a coiled-coil conformation.

In terms of assembly, forms multimeric structures containing a central pore.

The protein localises to the cell membrane. In terms of biological role, participates in the development of tolerance to both isoniazid and ethambutol. May function through a MDR-pump like mechanism, although it does not appear to directly transport isoniazid from the cell. The chain is Isoniazid-induced protein IniA (iniA) from Mycobacterium tuberculosis (strain CDC 1551 / Oshkosh).